A 705-amino-acid chain; its full sequence is Polyribonucleotide nucleotidyltransferase (705 aa).

The Mg(2+) site is built by Asp486 and Asp492. The region spanning 553–612 (PRIHTMKVSQDKIRDIIGKGGATIRQLTEETGTTIEIEDDGTVKIAATSGEQAEDAINRI) is the KH domain. An S1 motif domain is found at 622–690 (GTLYTGKVVR…RQGRVRLSIK (69 aa)).

This sequence belongs to the polyribonucleotide nucleotidyltransferase family. In terms of assembly, component of the RNA degradosome, which is a multiprotein complex involved in RNA processing and mRNA degradation. Requires Mg(2+) as cofactor.

The protein resides in the cytoplasm. The enzyme catalyses RNA(n+1) + phosphate = RNA(n) + a ribonucleoside 5'-diphosphate. Its function is as follows. Involved in mRNA degradation. Catalyzes the phosphorolysis of single-stranded polyribonucleotides processively in the 3'- to 5'-direction. The polypeptide is Polyribonucleotide nucleotidyltransferase (Colwellia psychrerythraea (strain 34H / ATCC BAA-681) (Vibrio psychroerythus)).